The sequence spans 242 residues: ATP-dependent dethiobiotin synthetase BioD (242 aa).

12–17 (EVGKTV) is an ATP binding site. Thr16 lines the Mg(2+) pocket. Residue Lys37 is part of the active site. Ser41 contacts substrate. ATP is bound by residues Asp51 and 112 to 115 (EGAG). Mg(2+) contacts are provided by Asp51 and Glu112.

It belongs to the dethiobiotin synthetase family. Homodimer. Mg(2+) is required as a cofactor.

Its subcellular location is the cytoplasm. The enzyme catalyses (7R,8S)-7,8-diammoniononanoate + CO2 + ATP = (4R,5S)-dethiobiotin + ADP + phosphate + 3 H(+). It participates in cofactor biosynthesis; biotin biosynthesis; biotin from 7,8-diaminononanoate: step 1/2. Functionally, catalyzes a mechanistically unusual reaction, the ATP-dependent insertion of CO2 between the N7 and N8 nitrogen atoms of 7,8-diaminopelargonic acid (DAPA, also called 7,8-diammoniononanoate) to form a ureido ring. In Bacillus cereus (strain B4264), this protein is ATP-dependent dethiobiotin synthetase BioD.